Reading from the N-terminus, the 178-residue chain is Gamma-crystallin S (178 aa).

An N-acetylserine modification is found at S2. The segment at 2 to 5 is N-terminal arm; that stretch reads SKTG. 2 Beta/gamma crystallin 'Greek key' domains span residues 6–44 and 45–87; these read GKIS…RVEG and GTWA…RAVH. The connecting peptide stretch occupies residues 88–93; sequence LSSGGQ. Beta/gamma crystallin 'Greek key' domains lie at 94-134 and 135-177; these read AKIQ…KVVE and GTWI…RRIV.

This sequence belongs to the beta/gamma-crystallin family. In terms of assembly, monomer.

Its function is as follows. Crystallins are the dominant structural components of the vertebrate eye lens. The polypeptide is Gamma-crystallin S (Crygs) (Mus musculus (Mouse)).